The primary structure comprises 1422 residues: MSGIKRTIKETDPDYEDVSVALPNKRHKAIENSARDAAVQKIETIIKEQFALEMKNKEHEIEVIDQRLIEARRMMDKLRACIVANYYASAGLLKVSEGSKTCDTMVFNHPAIKKFLESPSRSSSPANQRAETPSANHSESDSLSQHNDFLSDKDNNSNMDIEERLSNNMEQRPSRNTGRDTSRITGSHKTEQRNADLTDETSRLFVKKTIVVGNVSKYIPPDKREENDQSTHKWMVYVRGSRREPSINHFVKKVWFFLHPSYKPNDLVEVREPPFHLTRRGWGEFPVRVQVHFKDSQNKRIDIIHNLKLDRTYTGLQTLGAETVVDVELHRHSLGEDCIYPQSSESDISDAPPSLPLTIPAPVKASSPIKQSHEPVPDTSVEKGFPASTEAERHTPFYALPSSLERTPTKMTTSQKVTFCSHGNSAFQPIASSCKIVPQSQVPNPESPGKSFQPITMSCKIVSGSPISTPSPSPLPRTPTSTPVHVKQGTAGSVINNPYVIMDKQPGQVIGATTPSTGSPTNKISTASQVSQGTGSPVPKIHGSSFVTSTVKQEDSLFASMPPLCPIGSHPKVQSPKPITGGLGAFTKVIIKQEPGEAPHVPATGAASQSPLPQYVTVKGGHMIAVSPQKQVITPGEGIAQSAKVQPSKVVGVPVGSALPSTVKQAVAISGGQILVAKASSSVSKAVGPKQVVTQGVAKAIVSGGGGTIVAQPVQTLTKAQVTAAGPQKSGSQGSVMATLQLPATNLANLANLPPGTKLYLTTNSKNPSGKGKLLLIPQGAILRATNNANLQSGSAASGGSGAGGGGGGGGGGGSGSGGGGSTGGGGGTAGGGTQSTAGPGGISQHLTYTSYILKQTPQGTFLVGQPSPQTSGKQLTTGSVVQGTLGVSTSSAQGQQTLKVISGQKTTLFTQAAHGGQASLMKISDSTLKTVPATSQLSKPGTTMLRVAGGVITTATSPAVALSANGPAQQSEGMAPVSSSTVSSVTKTSGQQQVCVSQATVGTCKAATPTVVSATSLVPTPNPISGKATVSGLLKIHSSQSSPQQAVLTIPSQLKPLSVNTSGGVQTILMPVNKVVQSFSTSKPPAILPVAAPTPVVPSSAPAAVAKVKTEPETPGPSCLSQEGQTAVKTEESSELGNYVIKIDHLETIQQLLTAVVKKIPLITAKSEDASCFSAKSVEQYYGWNIGKRRAAEWQRAMTMRKVLQEILEKNPRFHHLTPLKTKHIAHWCRCHGYTPPDPESLRNDGDSIEDVLTQIDSEPECPSSFSSADNLCRKLEDLQQFQKREPENEEEVDILSLSEPVKINIKKEQEEKQEEVKFYLPPTPGSEFIGDVTQKIGITLQPVALHRNVYASVVEDMILKATEQLVNDILRQALAVGYQTASHNRIPKEITVSNIHQAICNIPFLDFLTNKHMGILNEDQ.

Lys-9 is covalently cross-linked (Glycyl lysine isopeptide (Lys-Gly) (interchain with G-Cter in SUMO2)). A coiled-coil region spans residues 47-80; it reads KEQFALEMKNKEHEIEVIDQRLIEARRMMDKLRA. Residue Lys-113 forms a Glycyl lysine isopeptide (Lys-Gly) (interchain with G-Cter in SUMO2) linkage. Positions 117 to 198 are disordered; sequence ESPSRSSSPA…KTEQRNADLT (82 aa). Phosphoserine is present on residues Ser-118, Ser-120, and Ser-157. The segment covering 119–148 has biased composition (polar residues); it reads PSRSSSPANQRAETPSANHSESDSLSQHND. Residues 149-165 show a composition bias toward basic and acidic residues; it reads FLSDKDNNSNMDIEERL. Polar residues predominate over residues 166–176; that stretch reads SNNMEQRPSRN. A compositionally biased stretch (basic and acidic residues) spans 177-198; that stretch reads TGRDTSRITGSHKTEQRNADLT. Residue Lys-189 forms a Glycyl lysine isopeptide (Lys-Gly) (interchain with G-Cter in SUMO2) linkage. The 146-residue stretch at 200–345 folds into the YEATS domain; the sequence is ETSRLFVKKT…EDCIYPQSSE (146 aa). Histone H3K27cr binding stretches follow at residues 259–261 and 282–284; these read HPS and WGE. Residue Lys-370 forms a Glycyl lysine isopeptide (Lys-Gly) (interchain with G-Cter in SUMO2) linkage. Thr-407 is modified (phosphothreonine). Ser-447, Ser-463, Ser-465, Ser-471, and Ser-473 each carry phosphoserine. Positions 465 to 486 are disordered; the sequence is SPISTPSPSPLPRTPTSTPVHV. A Phosphothreonine modification is found at Thr-478. Lys-487 participates in a covalent cross-link: Glycyl lysine isopeptide (Lys-Gly) (interchain with G-Cter in SUMO2). Polar residues predominate over residues 513 to 535; the sequence is TTPSTGSPTNKISTASQVSQGTG. The segment at 513–540 is disordered; the sequence is TTPSTGSPTNKISTASQVSQGTGSPVPK. Position 536 is a phosphoserine (Ser-536). A Glycyl lysine isopeptide (Lys-Gly) (interchain with G-Cter in SUMO2) cross-link involves residue Lys-552. Phosphoserine is present on Ser-575. Residue Lys-592 forms a Glycyl lysine isopeptide (Lys-Gly) (interchain with G-Cter in SUMO2) linkage. The residue at position 627 (Ser-627) is a Phosphoserine. Residues Lys-649 and Lys-773 each participate in a glycyl lysine isopeptide (Lys-Gly) (interchain with G-Cter in SUMO2) cross-link. Residues 794-842 form a disordered region; it reads GSAASGGSGAGGGGGGGGGGGSGSGGGGSTGGGGGTAGGGTQSTAGPGG. Residues 797-842 show a composition bias toward gly residues; that stretch reads ASGGSGAGGGGGGGGGGGSGSGGGGSTGGGGGTAGGGTQSTAGPGG. Lys-923 is covalently cross-linked (Glycyl lysine isopeptide (Lys-Gly) (interchain with G-Cter in SUMO2)). Lys-1110 participates in a covalent cross-link: Glycyl lysine isopeptide (Lys-Gly) (interchain with G-Cter in SUMO1); alternate. A Glycyl lysine isopeptide (Lys-Gly) (interchain with G-Cter in SUMO2); alternate cross-link involves residue Lys-1110. Residue Lys-1130 forms a Glycyl lysine isopeptide (Lys-Gly) (interchain with G-Cter in SUMO2) linkage. At Thr-1219 the chain carries Phosphothreonine. Glycyl lysine isopeptide (Lys-Gly) (interchain with G-Cter in SUMO2) cross-links involve residues Lys-1222 and Lys-1285.

As to quaternary structure, component of the ADA2A-containing complex (ATAC), composed of KAT14, KAT2A, TADA2L, TADA3L, ZZ3, MBIP, WDR5, YEATS2, SGF29 and DR1.

Its subcellular location is the nucleus. Functionally, chromatin reader component of the ATAC complex, a complex with histone acetyltransferase activity on histones H3 and H4. YEATS2 specifically recognizes and binds histone H3 crotonylated at 'Lys-27' (H3K27cr). Crotonylation marks active promoters and enhancers and confers resistance to transcriptional repressors. In Homo sapiens (Human), this protein is YEATS domain-containing protein 2.